A 369-amino-acid polypeptide reads, in one-letter code: Aminomethyltransferase (369 aa).

Belongs to the GcvT family. In terms of assembly, the glycine cleavage system is composed of four proteins: P, T, L and H.

The enzyme catalyses N(6)-[(R)-S(8)-aminomethyldihydrolipoyl]-L-lysyl-[protein] + (6S)-5,6,7,8-tetrahydrofolate = N(6)-[(R)-dihydrolipoyl]-L-lysyl-[protein] + (6R)-5,10-methylene-5,6,7,8-tetrahydrofolate + NH4(+). Functionally, the glycine cleavage system catalyzes the degradation of glycine. This chain is Aminomethyltransferase, found in Synechococcus sp. (strain WH7803).